The chain runs to 187 residues: UPF0301 protein Shewmr7_1270 (187 aa).

Belongs to the UPF0301 (AlgH) family.

The polypeptide is UPF0301 protein Shewmr7_1270 (Shewanella sp. (strain MR-7)).